The sequence spans 178 residues: ATP-dependent protease subunit HslV (178 aa).

Residue threonine 7 is part of the active site. Na(+) is bound by residues glycine 162, cysteine 165, and threonine 168.

This sequence belongs to the peptidase T1B family. HslV subfamily. A double ring-shaped homohexamer of HslV is capped on each side by a ring-shaped HslU homohexamer. The assembly of the HslU/HslV complex is dependent on binding of ATP.

It localises to the cytoplasm. The catalysed reaction is ATP-dependent cleavage of peptide bonds with broad specificity.. Its activity is regulated as follows. Allosterically activated by HslU binding. Functionally, protease subunit of a proteasome-like degradation complex believed to be a general protein degrading machinery. The polypeptide is ATP-dependent protease subunit HslV (Cupriavidus pinatubonensis (strain JMP 134 / LMG 1197) (Cupriavidus necator (strain JMP 134))).